The sequence spans 202 residues: Protein TIFY 11g (202 aa).

Over residues 1 to 11 (MDAVGAAGGGA) the composition is skewed to gly residues. The tract at residues 1–31 (MDAVGAAGGGAMLPAAARRGQPPQPPCMTTA) is disordered. Residues 12–21 (MLPAAARRGQ) are compositionally biased toward low complexity. The region spanning 101-136 (ATAPTAPLTIVYGGQVLVFEHYTAEAAEKLVQRTQH) is the Tify domain. The short motif at 185 to 200 (PIARKASLQRFLQKRK) is the Jas element. The Nuclear localization signal signature appears at 187–194 (ARKASLQR).

This sequence belongs to the TIFY/JAZ family. Post-translationally, ubiquitinated. Targeted for degradation by the SCF(COI1) E3 ubiquitin ligase-proteasome pathway during jasmonate signaling.

It localises to the nucleus. Functionally, repressor of jasmonate responses. In Oryza sativa subsp. japonica (Rice), this protein is Protein TIFY 11g.